Here is a 335-residue protein sequence, read N- to C-terminus: DNA-directed RNA polymerase subunit alpha (335 aa).

Positions 1-233 are alpha N-terminal domain (alpha-NTD); sequence MMLNATEFLT…QQISIFVDLE (233 aa). The interval 247 to 335 is alpha C-terminal domain (alpha-CTD); the sequence is VDPVLLRPVD…VDDRFSYRSR (89 aa).

The protein belongs to the RNA polymerase alpha chain family. As to quaternary structure, homodimer. The RNAP catalytic core consists of 2 alpha, 1 beta, 1 beta' and 1 omega subunit. When a sigma factor is associated with the core the holoenzyme is formed, which can initiate transcription.

It catalyses the reaction RNA(n) + a ribonucleoside 5'-triphosphate = RNA(n+1) + diphosphate. Functionally, DNA-dependent RNA polymerase catalyzes the transcription of DNA into RNA using the four ribonucleoside triphosphates as substrates. In Psychrobacter sp. (strain PRwf-1), this protein is DNA-directed RNA polymerase subunit alpha.